Reading from the N-terminus, the 1809-residue chain is Proprotein convertase subtilisin/kexin type 5 (1809 aa).

Residues 1–34 form the signal peptide; the sequence is MDWGWGSRCCRPGRRDLLCVLALLAGCLLPVCRT. Positions 35–116 are excised as a propeptide; sequence RVYTNHWAVK…QQVVKKRTKR (82 aa). Residues 117 to 1700 are Extracellular-facing; that stretch reads DYDLSRAQST…DTVFHEHTKT (1584 aa). The region spanning 136–455 is the Peptidase S8 domain; that stretch reads MWYMHCSDNT…FGLMDAEAMV (320 aa). Catalysis depends on charge relay system residues Asp173 and His214. Residues Asn227 and Asn383 are each glycosylated (N-linked (GlcNAc...) asparagine). Ser388 acts as the Charge relay system in catalysis. Residues 463–603 enclose the P/Homo B domain; sequence TVPQQHVCVE…SLVLYGTSVQ (141 aa). The short motif at 521–523 is the Cell attachment site element; sequence RGD. FU repeat units follow at residues 632-682, 685-732, 736-779, 781-826, 834-881, 884-929, 931-964, 965-1010, 1012-1054, 1058-1099, 1137-1179, 1183-1230, 1232-1276, 1278-1321, 1323-1369, 1373-1418, 1422-1467, 1471-1516, 1520-1567, 1571-1616, and 1622-1669; these read EDYA…GHFH, KKRC…GSYQ, KNIC…GQFF, GHDC…SYYL, YKSC…GEYI, QGHC…WKFE, KKQC…QDSE, YGEC…KTFG, KWEC…GFYG, LGEC…PTWP, TRQY…GTWL, SSSC…GFYA, DGVC…KHVA, EGVC…NFYP, MRQC…GTYK, NDEC…IEYW, SHRC…GYHT, SHQC…GYYG, SGRC…HYYA, AQTC…GEYR, and NFNC…SHPH. Residues 638–1685 are CRM (Cys-rich motif); sequence CDPECSEVGC…DCQSSTDECI (1048 aa). Residue Asn667 is glycosylated (N-linked (GlcNAc...) asparagine). N-linked (GlcNAc...) asparagine glycans are attached at residues Asn754, Asn804, and Asn854. N-linked (GlcNAc...) asparagine glycans are attached at residues Asn1642 and Asn1664. The chain crosses the membrane as a helical span at residues 1701 to 1721; sequence ALLVTSGAMLLLLLGAAVVVW. Topologically, residues 1722–1809 are cytoplasmic; the sequence is RKSRSQPVAK…EYDDESYSYQ (88 aa). AC regions lie at residues 1757–1776 and 1788–1809; these read VIEY…IVYM and YGLL…YSYQ.

It belongs to the peptidase S8 family. As to expression, expressed in the intestine, brain, adrenal gland, anterior pituitary, thyroid, ovaries, testis and lung. Highest levels are found in the gut, duodenum, jejunum and ileum. Expression is higher in female than in male reproductive organs.

It localises to the secreted. The protein localises to the endomembrane system. In terms of biological role, serine endoprotease that processes various proproteins by cleavage at paired basic amino acids, recognizing the RXXX[KR]R consensus motif. Likely functions in the constitutive and regulated secretory pathways. Plays an essential role in pregnancy establishment by proteolytic activation of a number of important factors such as BMP2, CALD1 and alpha-integrins. May be responsible for the maturation of gastrointestinal peptides. May be involved in the cellular proliferation of adrenal cortex via the activation of growth factors. This is Proprotein convertase subtilisin/kexin type 5 (Pcsk5) from Rattus norvegicus (Rat).